The sequence spans 93 residues: uncharacterized protein (93 aa).

The chain crosses the membrane as a helical span at residues 12–32 (VVGGLSFWTFSAGLIMIVNAL). Residues 47–66 (TANANGSDDDNENKNNSYRS) are disordered.

The protein resides in the cell membrane. This is an uncharacterized protein from Mycoplasma genitalium (strain ATCC 33530 / DSM 19775 / NCTC 10195 / G37) (Mycoplasmoides genitalium).